The following is a 274-amino-acid chain: Cytochrome b-c1 complex subunit Rieske, mitochondrial (274 aa).

Topologically, residues 79 to 103 (SHTDVKVPDFYDYRRLEVLDSTKSS) are mitochondrial matrix. The helical transmembrane segment at 104 to 140 (RESSEARKGFSYLVTAVTTVGVAYAAKNVVTQFISSM) threads the bilayer. Residues 141-274 (SASADVLAMA…FTGDDVVVVG (134 aa)) are Mitochondrial intermembrane-facing. The region spanning 187–272 (EAAVELSQLR…YEFTGDDVVV (86 aa)) is the Rieske domain. [2Fe-2S] cluster is bound by residues cysteine 217, histidine 219, cysteine 236, histidine 239, and serine 241. A disulfide bridge connects residues cysteine 222 and cysteine 238.

Belongs to the Rieske iron-sulfur protein family. In terms of assembly, component of the ubiquinol-cytochrome c oxidoreductase (cytochrome b-c1 complex, complex III, CIII), a multisubunit enzyme composed of 11 subunits. The complex is composed of 3 respiratory subunits cytochrome b, cytochrome c1 and Rieske protein UQCRFS1, 2 core protein subunits UQCRC1/QCR1 and UQCRC2/QCR2, and 6 low-molecular weight protein subunits UQCRH/QCR6, UQCRB/QCR7, UQCRQ/QCR8, UQCR10/QCR9, UQCR11/QCR10 and subunit 9, the cleavage product of Rieske protein UQCRFS1. The complex exists as an obligatory dimer and forms supercomplexes (SCs) in the inner mitochondrial membrane with NADH-ubiquinone oxidoreductase (complex I, CI) and cytochrome c oxidase (complex IV, CIV), resulting in different assemblies (supercomplex SCI(1)III(2)IV(1) and megacomplex MCI(2)III(2)IV(2)). Incorporation of the Rieske protein UQCRFS1 is the penultimate step in complex III assembly. Interacts with TTC19, which is involved in the clearance of UQCRFS1 fragments. Component of the ubiquinol-cytochrome c oxidoreductase (cytochrome b-c1 complex, complex III, CIII). Subunit 9 corresponds to the mitochondrial targeting sequence (MTS) of Rieske protein UQCRFS1. It is retained after processing and incorporated inside complex III, where it remains bound to the complex and localizes between the 2 core subunits UQCRC1/QCR1 and UQCRC2/QCR2. Requires [2Fe-2S] cluster as cofactor. Post-translationally, proteolytic processing is necessary for the correct insertion of UQCRFS1 in the complex III dimer. Several fragments are generated during UQCRFS1 insertion, most probably due to the endogenous matrix-processing peptidase (MPP) activity of the 2 core protein subunits UQCRC1/QCR1 and UQCRC2/QCR2, which are homologous to the 2 mitochondrial-processing peptidase (MPP) subunits beta-MPP and alpha-MPP respectively. The action of the protease is also necessary for the clearance of the UQCRFS1 fragments.

The protein localises to the mitochondrion inner membrane. It catalyses the reaction a quinol + 2 Fe(III)-[cytochrome c](out) = a quinone + 2 Fe(II)-[cytochrome c](out) + 2 H(+)(out). In terms of biological role, component of the ubiquinol-cytochrome c oxidoreductase, a multisubunit transmembrane complex that is part of the mitochondrial electron transport chain which drives oxidative phosphorylation. The respiratory chain contains 3 multisubunit complexes succinate dehydrogenase (complex II, CII), ubiquinol-cytochrome c oxidoreductase (cytochrome b-c1 complex, complex III, CIII) and cytochrome c oxidase (complex IV, CIV), that cooperate to transfer electrons derived from NADH and succinate to molecular oxygen, creating an electrochemical gradient over the inner membrane that drives transmembrane transport and the ATP synthase. The cytochrome b-c1 complex catalyzes electron transfer from ubiquinol to cytochrome c, linking this redox reaction to translocation of protons across the mitochondrial inner membrane, with protons being carried across the membrane as hydrogens on the quinol. In the process called Q cycle, 2 protons are consumed from the matrix, 4 protons are released into the intermembrane space and 2 electrons are passed to cytochrome c. The Rieske protein is a catalytic core subunit containing a [2Fe-2S] iron-sulfur cluster. It cycles between 2 conformational states during catalysis to transfer electrons from the quinol bound in the Q(0) site in cytochrome b to cytochrome c1. Incorporation of UQCRFS1 is the penultimate step in complex III assembly. Functionally, component of the ubiquinol-cytochrome c oxidoreductase (cytochrome b-c1 complex, complex III, CIII). UQCRFS1 undergoes proteolytic processing once it is incorporated in the complex III dimer. One of the fragments, called subunit 9, corresponds to its mitochondrial targeting sequence (MTS). The proteolytic processing is necessary for the correct insertion of UQCRFS1 in the complex III dimer, but the persistence of UQCRFS1-derived fragments may prevent newly imported UQCRFS1 to be processed and assembled into complex III and is detrimental for the complex III structure and function. This Chlorocebus aethiops (Green monkey) protein is Cytochrome b-c1 complex subunit Rieske, mitochondrial (UQCRFS1).